The chain runs to 364 residues: MSATPLVSQVDSHNPEKSKLIPPLLGASVAELSAWVQQQGQPAYRGKQLHEWIYDKGVRSLADISVFSKQWRAEVAEIPIGRSTLHYRSVAPDGTVKYLLRLTDGQIIETVGIPTFAERGEGPKARLTVCVSTQVGCPMACDFCATGKGGYKRNLARHEIIDQVLTVQEDFQQRVSNVVFMGLGEPLLNTENVLAALKSLNQDIGIGQRSLTVSTVGIRDRIRQFAQNNLQITLAVSLHAPNQALREKLIPSARAYPLEELLAECREYVEITGRRVTFEYVLLAGVNDLPEHALELSKCMRGFQSHVNLIPYNPIQEVDYKRPNRDRIEAFVNVLKQQNTAVSVRYSRGLEADAACGQLRASKN.

Residue glutamate 109 is the Proton acceptor of the active site. One can recognise a Radical SAM core domain in the interval 123 to 351 (PKARLTVCVS…VSVRYSRGLE (229 aa)). Residues cysteine 130 and cysteine 356 are joined by a disulfide bond. Cysteine 137, cysteine 141, and cysteine 144 together coordinate [4Fe-4S] cluster. Residues 184-185 (GE), serine 214, 237-239 (SLH), and asparagine 313 each bind S-adenosyl-L-methionine. Cysteine 356 functions as the S-methylcysteine intermediate in the catalytic mechanism.

It belongs to the radical SAM superfamily. RlmN family. The cofactor is [4Fe-4S] cluster.

It localises to the cytoplasm. The enzyme catalyses adenosine(2503) in 23S rRNA + 2 reduced [2Fe-2S]-[ferredoxin] + 2 S-adenosyl-L-methionine = 2-methyladenosine(2503) in 23S rRNA + 5'-deoxyadenosine + L-methionine + 2 oxidized [2Fe-2S]-[ferredoxin] + S-adenosyl-L-homocysteine. The catalysed reaction is adenosine(37) in tRNA + 2 reduced [2Fe-2S]-[ferredoxin] + 2 S-adenosyl-L-methionine = 2-methyladenosine(37) in tRNA + 5'-deoxyadenosine + L-methionine + 2 oxidized [2Fe-2S]-[ferredoxin] + S-adenosyl-L-homocysteine. Specifically methylates position 2 of adenine 2503 in 23S rRNA and position 2 of adenine 37 in tRNAs. The sequence is that of Probable dual-specificity RNA methyltransferase RlmN from Nostoc punctiforme (strain ATCC 29133 / PCC 73102).